The following is a 1042-amino-acid chain: MENAHTKTVEEVLGHFGVNESTGLSLEQVKKLKERWGSNELPAEEGKTLLELVIEQFEDLLVRILLLAACISFVLAWFEEGEETITAFVEPFVILLILVANAIVGVWQERNAENAIEALKEYEPEMGKVYRQDRKSVQRIKAKDIVPGDIVEIAVGDKVPADIRLTSIKSTTLRVDQSILTGESVSVIKHTDPVPDPRAVNQDKKNMLFSGTNIAAGKAMGVVVATGVNTEIGKIRDEMVATEQERTPLQQKLDEFGEQLSKVISLICIAVWIINIGHFNDPVHGGSWIRGAIYYFKIAVALAVAAIPEGLPAVITTCLALGTRRMAKKNAIVRSLPSVETLGCTSVICSDKTGTLTTNQMSVCRMFILDKVEGDTCSLNEFTITGSTYAPIGEVHKDDKPVKCHQYDGLVELATICALCNDSALDYNEAKGVYEKVGEATETALTCLVEKMNVFDTELKGLSKIERANACNSVIKQLMKKEFTLEFSRDRKSMSVYCTPNKPSRTSMSKMFVKGAPEGVIDRCTHIRVGSTKVPMTPGVKQKIMSVIREWGSGSDTLRCLALATHDNPMRREEMNLEDSANFIKYETNLTFVGCVGMLDPPRIEVASSVKLCRQAGIRVIMITGDNKGTAVAICRRIGIFGQDEDVTSKAFTGREFDELNPSAQREACLNARCFARVEPSHKSKIVEFLQSFDEITAMTGDGVNDAPALKKSEIGIAMGSGTAVAKTASEMVLADDNFSTIVAAVEEGRAIYNNMKQFIRYLISSNVGEVVCIFLTAALGFPEALIPVQLLWVNLVTDGLPATALGFNPPDLDIMNKPPRNPKEPLISGWLFFRYLAIGCYVGAATVGAAAWWFIAADGGPRVTFYQLSHFLQCKEDNPDFEGVDCAVFESPYPMTMALSVLVTIEMCNALNSLSENQSLLRMPPWENIWLVGSICLSMSLHFLILYVEPLPLIFQITPLNLTQWLMVLKISLPVILMDETLKFVARNYLEPGKECVQPATKSCSFSACTDGISWPFVLLIMPLVIWVYSTDTNFSDMFWS.

Residues 1–48 (MENAHTKTVEEVLGHFGVNESTGLSLEQVKKLKERWGSNELPAEEGKT) are Cytoplasmic-facing. S38 bears the Phosphoserine mark. The chain crosses the membrane as a helical span at residues 49–69 (LLELVIEQFEDLLVRILLLAA). The Lumenal portion of the chain corresponds to 70–89 (CISFVLAWFEEGEETITAFV). The chain crosses the membrane as a helical span at residues 90-110 (EPFVILLILVANAIVGVWQER). The Cytoplasmic segment spans residues 111–253 (NAENAIEALK…QERTPLQQKL (143 aa)). The chain crosses the membrane as a helical span at residues 254 to 273 (DEFGEQLSKVISLICIAVWI). The Lumenal portion of the chain corresponds to 274-295 (INIGHFNDPVHGGSWIRGAIYY). A 3'-nitrotyrosine mark is found at Y294 and Y295. A helical membrane pass occupies residues 296–313 (FKIAVALAVAAIPEGLPA). Residues V304, A305, I307, and E309 each coordinate Ca(2+). At 314–756 (VITTCLALGT…EEGRAIYNNM (443 aa)) the chain is on the cytoplasmic side. D351 acts as the 4-aspartylphosphate intermediate in catalysis. Mg(2+) is bound by residues D351 and T353. Position 353 (T353) interacts with ATP. T441 carries the post-translational modification Phosphothreonine. Residues E442, R489, and K514 each contribute to the ATP site. Residue S531 is modified to Phosphoserine. R559 provides a ligand contact to ATP. Positions 575–594 (MNLEDSANFIKYETNLTFVG) are interaction with HAX1. S580 is modified (phosphoserine). Positions 624, 625, and 626 each coordinate ATP. S663 carries the phosphoserine modification. Residues R677 and K683 each coordinate ATP. D702 is a Mg(2+) binding site. N705 serves as a coordination point for ATP. The helical transmembrane segment at 757–776 (KQFIRYLISSNVGEVVCIFL) threads the bilayer. Ca(2+) contacts are provided by N767 and E770. Residues 777-786 (TAALGFPEAL) lie on the Lumenal side of the membrane. Residues 787-807 (IPVQLLWVNLVTDGLPATALG) traverse the membrane as a helical segment. An interaction with PLN region spans residues 787-807 (IPVQLLWVNLVTDGLPATALG). Residues 788–1042 (PVQLLWVNLV…DTNFSDMFWS (255 aa)) form an interaction with TMEM64 and PDIA3 region. 3 residues coordinate Ca(2+): N795, T798, and D799. The Cytoplasmic portion of the chain corresponds to 808-827 (FNPPDLDIMNKPPRNPKEPL). Residues 828 to 850 (ISGWLFFRYLAIGCYVGAATVGA) traverse the membrane as a helical segment. Residues 851–896 (AAWWFIAADGGPRVTFYQLSHFLQCKEDNPDFEGVDCAVFESPYPM) lie on the Lumenal side of the membrane. Cysteines 875 and 887 form a disulfide. A helical membrane pass occupies residues 897-916 (TMALSVLVTIEMCNALNSLS). E907 contacts Ca(2+). Residues 917–929 (ENQSLLRMPPWEN) lie on the Cytoplasmic side of the membrane. Residues 930-948 (IWLVGSICLSMSLHFLILY) traverse the membrane as a helical segment. Residues 931 to 942 (WLVGSICLSMSL) are interaction with PLN. The Lumenal portion of the chain corresponds to 949-963 (VEPLPLIFQITPLNL). A helical membrane pass occupies residues 964–984 (TQWLMVLKISLPVILMDETLK). Over 985 to 1042 (FVARNYLEPGKECVQPATKSCSFSACTDGISWPFVLLIMPLVIWVYSTDTNFSDMFWS) the chain is Cytoplasmic.

Belongs to the cation transport ATPase (P-type) (TC 3.A.3) family. Type IIA subfamily. Interacts with sarcolipin (SLN); the interaction inhibits ATP2A2 Ca(2+) affinity. Interacts with phospholamban (PLN); the interaction inhibits ATP2A2 Ca(2+) affinity. Interacts with myoregulin (MRLN). Interacts with ARLN and ERLN; the interactions inhibit ATP2A2 Ca(2+) affinity. Interacts with STRIT1/DWORF; the interaction results in activation of ATP2A2. Interacts with the monomeric forms of SLN, PLN, ARLN, ERLN and STRI1/DWORF. Interacts with HAX1. Interacts with S100A8 and S100A9. Interacts with SLC35G1 and STIM1. Interacts with TMEM203. Interacts with TMEM64 and PDIA3. Interacts with TMX1. Interacts with TMX2. Interacts with VMP1; VMP1 competes with PLN and SLN to prevent them from forming an inhibitory complex with ATP2A2. Interacts with ULK1. Interacts with S100A1 in a Ca(2+)-dependent manner. Interacts with TUNAR. Interacts with FLVCR2; this interaction occurs in the absence of heme and promotes ATP2A2 proteasomal degradation; this complex is dissociated upon heme binding. Interacts with FNIP1. As to quaternary structure, interacts with TRAM2 (via C-terminus). The cofactor is Mg(2+). In terms of processing, nitrated under oxidative stress. Nitration on the two tyrosine residues inhibits catalytic activity. Post-translationally, serotonylated on Gln residues by TGM2 in response to hypoxia, leading to its inactivation. In terms of tissue distribution, detected in heart left ventricle (at protein level). Isoform 2 is highly expressed in heart and slow twitch skeletal muscle. Isoform 1 is widely expressed.

The protein localises to the endoplasmic reticulum membrane. Its subcellular location is the sarcoplasmic reticulum membrane. It carries out the reaction Ca(2+)(in) + ATP + H2O = Ca(2+)(out) + ADP + phosphate + H(+). Its activity is regulated as follows. Has different conformational states with differential Ca2+ affinity. The E1 conformational state (active form) shows high Ca(2+) affinity, while the E2 state exhibits low Ca(2+) affinity. Binding of ATP allosterically increases its affinity for subsequent binding of Ca2+. Reversibly inhibited by phospholamban (PLN) at low calcium concentrations. PLN inhibits ATP2A2 Ca(2+) affinity by disrupting its allosteric activation by ATP. Inhibited by sarcolipin (SLN) and myoregulin (MRLN). The inhibition is blocked by VMP1. Enhanced by STRIT1/DWORF; STRIT1 increases activity by displacing sarcolipin (SLN), phospholamban (PLN) and myoregulin (MRLN). Stabilizes SERCA2 in its E2 state. Functionally, this magnesium-dependent enzyme catalyzes the hydrolysis of ATP coupled with the translocation of calcium from the cytosol to the sarcoplasmic reticulum lumen. Involved in autophagy in response to starvation. Upon interaction with VMP1 and activation, controls ER-isolation membrane contacts for autophagosome formation. Also modulates ER contacts with lipid droplets, mitochondria and endosomes. In coordination with FLVCR2 mediates heme-stimulated switching from mitochondrial ATP synthesis to thermogenesis. In terms of biological role, involved in the regulation of the contraction/relaxation cycle. Acts as a regulator of TNFSF11-mediated Ca(2+) signaling pathways via its interaction with TMEM64 which is critical for the TNFSF11-induced CREB1 activation and mitochondrial ROS generation necessary for proper osteoclast generation. Association between TMEM64 and SERCA2 in the ER leads to cytosolic Ca(2+) spiking for activation of NFATC1 and production of mitochondrial ROS, thereby triggering Ca(2+) signaling cascades that promote osteoclast differentiation and activation. This Sus scrofa (Pig) protein is Sarcoplasmic/endoplasmic reticulum calcium ATPase 2 (ATP2A2).